The following is a 122-amino-acid chain: Large ribosomal subunit protein uL14c (122 aa).

The protein belongs to the universal ribosomal protein uL14 family. As to quaternary structure, part of the 50S ribosomal subunit.

The protein resides in the plastid. It is found in the chloroplast. In terms of biological role, binds to 23S rRNA. This chain is Large ribosomal subunit protein uL14c, found in Lepidium virginicum (Virginia pepperweed).